A 555-amino-acid polypeptide reads, in one-letter code: Methyl-coenzyme M reductase subunit alpha (555 aa).

Residue Q152 coordinates coenzyme F430. Coenzyme B is bound by residues R230, 261 to 262 (KH), and R275. Y337 and Y448 together coordinate coenzyme M.

It belongs to the methyl-coenzyme M reductase alpha subunit family. MCR is a hexamer of two alpha, two beta, and two gamma chains, forming a dimer of heterotrimers. Coenzyme F430 serves as cofactor.

The protein localises to the cytoplasm. The enzyme catalyses coenzyme B + methyl-coenzyme M = methane + coenzyme M-coenzyme B heterodisulfide. Its pathway is one-carbon metabolism; methyl-coenzyme M reduction; methane from methyl-coenzyme M: step 1/1. In terms of biological role, component of the methyl-coenzyme M reductase (MCR) I that catalyzes the reductive cleavage of methyl-coenzyme M (CoM-S-CH3 or 2-(methylthio)ethanesulfonate) using coenzyme B (CoB or 7-mercaptoheptanoylthreonine phosphate) as reductant which results in the production of methane and the mixed heterodisulfide of CoB and CoM (CoM-S-S-CoB). This is the final step in methanogenesis. The protein is Methyl-coenzyme M reductase subunit alpha (mcrA) of Methanococcus voltae.